The following is a 186-amino-acid chain: Peptidyl-tRNA hydrolase (186 aa).

Tyrosine 14 serves as a coordination point for tRNA. The active-site Proton acceptor is the histidine 19. The tRNA site is built by tyrosine 61, asparagine 63, and asparagine 107.

It belongs to the PTH family. In terms of assembly, monomer.

The protein resides in the cytoplasm. The catalysed reaction is an N-acyl-L-alpha-aminoacyl-tRNA + H2O = an N-acyl-L-amino acid + a tRNA + H(+). Its function is as follows. Hydrolyzes ribosome-free peptidyl-tRNAs (with 1 or more amino acids incorporated), which drop off the ribosome during protein synthesis, or as a result of ribosome stalling. In terms of biological role, catalyzes the release of premature peptidyl moieties from peptidyl-tRNA molecules trapped in stalled 50S ribosomal subunits, and thus maintains levels of free tRNAs and 50S ribosomes. This chain is Peptidyl-tRNA hydrolase, found in Helicobacter pylori (strain HPAG1).